Reading from the N-terminus, the 844-residue chain is Neuronal PAS domain-containing protein 4B (844 aa).

Positions K61–R74 are basic motif; degenerate. The bHLH domain maps to K61–S114. A helix-loop-helix motif region spans residues D75 to S114. PAS domains lie at S132–H190 and D294–G343. Over residues S410–Q422 the composition is skewed to polar residues. 4 disordered regions span residues S410 to S432, G444 to H479, P702 to Q725, and T757 to A784. Residues P704–P716 show a composition bias toward pro residues.

In terms of assembly, efficient DNA binding requires dimerization with another bHLH protein.

Its subcellular location is the nucleus. Its function is as follows. Transcription factor expressed in neurons of the brain that regulates the excitatory-inhibitory balance within neural circuits and is required for contextual memory in the hippocampus. Plays a key role in the structural and functional plasticity of neurons. Acts as an early-response transcription factor in both excitatory and inhibitory neurons, where it induces distinct but overlapping sets of late-response genes in these two types of neurons, allowing the synapses that form on inhibitory and excitatory neurons to be modified by neuronal activity in a manner specific to their function within a circuit, thereby facilitating appropriate circuit responses to sensory experience. The protein is Neuronal PAS domain-containing protein 4B (npas4b) of Danio rerio (Zebrafish).